The sequence spans 95 residues: Putative defensin-like protein 262 (95 aa).

The signal sequence occupies residues 1-26; that stretch reads MEKTSLKLIFLFSLTVIAFCSSLGDA. 4 cysteine pairs are disulfide-bonded: C48–C95, C64–C83, C70–C91, and C74–C93.

This sequence belongs to the DEFL family.

It localises to the secreted. The polypeptide is Putative defensin-like protein 262 (Arabidopsis thaliana (Mouse-ear cress)).